The sequence spans 482 residues: Interferon-induced protein with tetratricopeptide repeats 5 (482 aa).

8 TPR repeats span residues 51–84 (LALYNLLAYVKHLKGQNKDALECLEQAEEIIQQE), 94–127 (LVTWGNYAWVYYHMDQLEEAQKYTGKIGNVCKKL), 138–173 (PETDCEKGWALLKFGGKYYQKAKAAFEKALEVEPDN), 181–214 (AITVYRLDDSDREGSVKSFSLGPLRKAVTLNPDN), 249–282 (PYVLRYAAKFYRRKNSWNKALELLKKALEVTPTS), 338–371 (AFAYTDLANMYAEGGQYSNAEDIFRKALRLENIT), 376–410 (HQIHYHYGRFQEFHRKSENTAIHHYLEALKVKDRS), and 435–468 (VQSLSALGFVYKLEGEKRQAAEYYEKAQKIDPEN). Residues 254–260 (YAAKFYR) are interaction with the 5'-triphosphate group of PPP-RNA.

Belongs to the IFIT family. Monomer. Interacts with MAP3K7 and the components of the IKK core complex CHUK, IKBKB and IKBKG; the interaction synergizes the recruitment of IKK to MAP3K7 and enhances IKK phosphorylation.

It is found in the cell projection. The protein localises to the ruffle membrane. Functionally, interferon-induced RNA-binding protein involved in the human innate immune response. Has a broad and adaptable RNA structure recognition important for RNA recognition specificity in antiviral defense. Binds precursor and processed tRNAs as well as poly-U-tailed tRNA fragments. Specifically binds single-stranded RNA bearing a 5'-triphosphate group (PPP-RNA), thereby acting as a sensor of viral single-stranded RNAs. Single-stranded PPP-RNAs, which lack 2'-O-methylation of the 5' cap and bear a 5'-triphosphate group instead, are specific from viruses, providing a molecular signature to distinguish between self and non-self mRNAs by the host during viral infection. Directly binds PPP-RNA in a non-sequence-specific manner. Also recognizes and selectively binds AT-rich dsDNA. Additionally, as a mediator in innate immunity, positively regulates IKK-NFKB signaling by sinergizing the recruitment of IKK to MAP3K7. The chain is Interferon-induced protein with tetratricopeptide repeats 5 (IFIT5) from Homo sapiens (Human).